A 193-amino-acid chain; its full sequence is MKKMLFVVAAVFLLAGCPSMLPQQPPAPVEPVTPTEPTEPPKPIEPPIEVVPTPPKITSINWNAAIQPLIREMSVTDDLATGKLLVVDNVKNNSGGNIQAVNATNTIIDSVNSISALQTVPYAQMMSARKALGLSGEDSLGLRSAAIGLARYLQADYILFSTVDGKKDNRVISMQLMSVASGEILWSGRHKVE.

Positions methionine 1–glycine 16 are cleaved as a signal peptide. Cysteine 17 carries N-palmitoyl cysteine lipidation. Residue cysteine 17 is the site of S-diacylglycerol cysteine attachment. Residues glutamine 23 to valine 50 form a disordered region. The segment covering proline 37–proline 46 has biased composition (pro residues).

Belongs to the LpoB family. As to quaternary structure, interacts with PBP1b.

It localises to the cell outer membrane. Regulator of peptidoglycan synthesis that is essential for the function of penicillin-binding protein 1B (PBP1b). This is Penicillin-binding protein activator LpoB from Proteus mirabilis (strain HI4320).